Consider the following 142-residue polypeptide: uncharacterized protein (142 aa).

A compositionally biased stretch (basic residues) spans 1-14 (MKNVSPRRNKHYKS). The interval 1–40 (MKNVSPRRNKHYKSYKPQVPLKKPVLLPQHPPYRNRRKKK) is disordered. Low complexity predominate over residues 16 to 28 (KPQVPLKKPVLLP).

This is an uncharacterized protein from Aquifex aeolicus (strain VF5).